The primary structure comprises 216 residues: NADH-quinone oxidoreductase subunit C (216 aa).

The protein belongs to the complex I 30 kDa subunit family. As to quaternary structure, NDH-1 is composed of 14 different subunits. Subunits NuoB, C, D, E, F, and G constitute the peripheral sector of the complex.

It localises to the cell inner membrane. The enzyme catalyses a quinone + NADH + 5 H(+)(in) = a quinol + NAD(+) + 4 H(+)(out). In terms of biological role, NDH-1 shuttles electrons from NADH, via FMN and iron-sulfur (Fe-S) centers, to quinones in the respiratory chain. The immediate electron acceptor for the enzyme in this species is believed to be ubiquinone. Couples the redox reaction to proton translocation (for every two electrons transferred, four hydrogen ions are translocated across the cytoplasmic membrane), and thus conserves the redox energy in a proton gradient. This chain is NADH-quinone oxidoreductase subunit C, found in Francisella tularensis subsp. holarctica (strain FTNF002-00 / FTA).